We begin with the raw amino-acid sequence, 694 residues long: Polyphosphate kinase (694 aa).

Asn45 lines the ATP pocket. Residues Arg367 and Arg397 each contribute to the Mg(2+) site. His427 acts as the Phosphohistidine intermediate in catalysis. ATP-binding residues include Tyr460, Arg553, and His580.

The protein belongs to the polyphosphate kinase 1 (PPK1) family. Requires Mg(2+) as cofactor. Post-translationally, an intermediate of this reaction is the autophosphorylated ppk in which a phosphate is covalently linked to a histidine residue through a N-P bond.

It catalyses the reaction [phosphate](n) + ATP = [phosphate](n+1) + ADP. In terms of biological role, catalyzes the reversible transfer of the terminal phosphate of ATP to form a long-chain polyphosphate (polyP). In Campylobacter jejuni (strain RM1221), this protein is Polyphosphate kinase.